The following is a 208-amino-acid chain: Uracil phosphoribosyltransferase (208 aa).

5-phospho-alpha-D-ribose 1-diphosphate contacts are provided by residues Arg-78, Arg-103, and Asp-130–Ser-138. Uracil-binding positions include Ile-193 and Gly-198–Ala-200. Position 199 (Asp-199) interacts with 5-phospho-alpha-D-ribose 1-diphosphate.

The protein belongs to the UPRTase family. It depends on Mg(2+) as a cofactor.

It carries out the reaction UMP + diphosphate = 5-phospho-alpha-D-ribose 1-diphosphate + uracil. It participates in pyrimidine metabolism; UMP biosynthesis via salvage pathway; UMP from uracil: step 1/1. With respect to regulation, allosterically activated by GTP. Its function is as follows. Catalyzes the conversion of uracil and 5-phospho-alpha-D-ribose 1-diphosphate (PRPP) to UMP and diphosphate. This Aliivibrio salmonicida (strain LFI1238) (Vibrio salmonicida (strain LFI1238)) protein is Uracil phosphoribosyltransferase.